The chain runs to 317 residues: Melanocyte-stimulating hormone receptor (317 aa).

Topologically, residues Met-1–Glu-37 are extracellular. The N-linked (GlcNAc...) asparagine glycan is linked to Asn-29. Residues Val-38–Ile-63 traverse the membrane as a helical segment. Over Ala-64–Pro-72 the chain is Cytoplasmic. Residues Met-73–Leu-93 traverse the membrane as a helical segment. Residues Glu-94–Asn-118 are Extracellular-facing. A helical transmembrane segment spans residues Val-119–Val-140. Topologically, residues Asp-141–Arg-163 are cytoplasmic. The chain crosses the membrane as a helical span at residues Ala-164 to Tyr-183. Residues Asp-184–Cys-191 lie on the Extracellular side of the membrane. The chain crosses the membrane as a helical span at residues Leu-192 to Leu-211. Topologically, residues Ala-212–Ala-240 are cytoplasmic. A helical membrane pass occupies residues Ala-241–Leu-266. The Extracellular portion of the chain corresponds to Cys-267–Asn-279. A helical membrane pass occupies residues Phe-280–Phe-300. The Cytoplasmic segment spans residues Arg-301–Trp-317. The S-palmitoyl cysteine moiety is linked to residue Cys-315.

The protein belongs to the G-protein coupled receptor 1 family. In terms of assembly, interacts with MGRN1, but does not undergo MGRN1-mediated ubiquitination; this interaction competes with GNAS-binding and thus inhibits agonist-induced cAMP production. Interacts with OPN3; the interaction results in a decrease in MC1R-mediated cAMP signaling and ultimately a decrease in melanin production in melanocytes.

Its subcellular location is the cell membrane. Its function is as follows. Receptor for MSH (alpha, beta and gamma) and ACTH. The activity of this receptor is mediated by G proteins which activate adenylate cyclase. Mediates melanogenesis, the production of eumelanin (black/brown) and phaeomelanin (red/yellow), via regulation of cAMP signaling in melanocytes. This chain is Melanocyte-stimulating hormone receptor (MC1R), found in Allenopithecus nigroviridis (Allen's swamp monkey).